We begin with the raw amino-acid sequence, 231 residues long: Orotidine 5'-phosphate decarboxylase (231 aa).

Residues D11, K33, 60–69, T120, R181, Q190, G210, and R211 contribute to the substrate site; that span reads DLKFHDIPNT. Catalysis depends on K62, which acts as the Proton donor.

This sequence belongs to the OMP decarboxylase family. Type 1 subfamily. In terms of assembly, homodimer.

It carries out the reaction orotidine 5'-phosphate + H(+) = UMP + CO2. The protein operates within pyrimidine metabolism; UMP biosynthesis via de novo pathway; UMP from orotate: step 2/2. Catalyzes the decarboxylation of orotidine 5'-monophosphate (OMP) to uridine 5'-monophosphate (UMP). This is Orotidine 5'-phosphate decarboxylase from Shewanella oneidensis (strain ATCC 700550 / JCM 31522 / CIP 106686 / LMG 19005 / NCIMB 14063 / MR-1).